A 440-amino-acid polypeptide reads, in one-letter code: Xylose isomerase (440 aa).

Catalysis depends on residues His100 and Asp103. 7 residues coordinate Mg(2+): Glu231, Glu267, His270, Asp295, Asp306, Asp308, and Asp338.

It belongs to the xylose isomerase family. As to quaternary structure, homotetramer. Mg(2+) serves as cofactor.

The protein resides in the cytoplasm. The enzyme catalyses alpha-D-xylose = alpha-D-xylulofuranose. The polypeptide is Xylose isomerase (Paraburkholderia phytofirmans (strain DSM 17436 / LMG 22146 / PsJN) (Burkholderia phytofirmans)).